Reading from the N-terminus, the 285-residue chain is Glutamate racemase (285 aa).

Substrate is bound by residues 30–31 and 62–63; these read DS and YG. Cys94 acts as the Proton donor/acceptor in catalysis. 95–96 lines the substrate pocket; the sequence is NT. Cys206 functions as the Proton donor/acceptor in the catalytic mechanism. Substrate is bound at residue 207–208; that stretch reads TH.

The protein belongs to the aspartate/glutamate racemases family.

It carries out the reaction L-glutamate = D-glutamate. The protein operates within cell wall biogenesis; peptidoglycan biosynthesis. Its function is as follows. Provides the (R)-glutamate required for cell wall biosynthesis. The sequence is that of Glutamate racemase from Pectobacterium atrosepticum (strain SCRI 1043 / ATCC BAA-672) (Erwinia carotovora subsp. atroseptica).